The primary structure comprises 317 residues: Methyltransferase CPUR_05424 (317 aa).

A methyltransferase domain region spans residues 57–149; the sequence is DVGAGNGPYA…QLRPGGTFAC (93 aa).

It belongs to the methyltransferase superfamily.

It participates in pigment biosynthesis. Its function is as follows. Methyltransferase; part of the ergochrome gene cluster responsible for the typical purple-black color of the ergot sclerotia. The ergochrome gene cluster produces several ergot pigments including the yellow ergochrome secalonic acid and its derivatives, as well as the red anthraquinones endocrocin and clavorubin. The pathway begins with the synthesis of atrochrysone thioester by the polyketide synthase (PKS) CPUR_05437. The atrochrysone carboxyl ACP thioesterase CPUR_05436 then breaks the thioester bond and releases the atrochrysone carboxylic acid from CPUR_05437. The atrochrysone carboxylic acid is then converted to atrochrysone which is further transformed into emodin anthrone. The next step is performed by the anthrone oxygenase CPUR_05434 that catalyzes the oxidation of emodinanthrone to emodin. Emodin is further modified to yield monodictyphenone via several steps involving CPUR_05427, CPUR_05428, CPUR_05429 and CPUR_05430. The short chain dehydrogenase/reductase CPUR_05418 then catalyzes the C-5 ketoreduction to give the xanthone skeleton of the monomeric units. Ergochromes formation requires further dimerization steps of different xanthone units, probably catalyzed by the cytochrome P450 monooxygenase CPUR_05419. CPUR_05425, CPUR_05426 and CPUR_05431 are unique to Claviceps, thus it is likely that they are involved in further modification of xanthone units or in their dimerization. The yellow ergochromes and the red anthraquinone pigments endocrocin and clavorubin are products from the same PKS derived precursors and the latter are likely shunt products in the pathway of xanthone biosynthesis. It is proposed that atrochrysone carboxylic acid released from the PKS CPUR_05437 can also be converted to endocrocin anthrone which is further oxidized into endocrocin by CPUR_05435. Endocrocin could be then modified to clavorubin, possibly by CPUR_05423 and CPUR_05431. Clavorubin is the principal anthraquinone metabolite produced by the cluster with a much higher yield compared to endocrocin. This is Methyltransferase CPUR_05424 from Claviceps purpurea (strain 20.1) (Ergot fungus).